The primary structure comprises 172 residues: Co-chaperone protein HscB (172 aa).

The J domain occupies 2–74 (DYFTLFGLPI…LKRAEYMLSL (73 aa)).

Belongs to the HscB family. As to quaternary structure, interacts with HscA and stimulates its ATPase activity. Interacts with IscU.

Co-chaperone involved in the maturation of iron-sulfur cluster-containing proteins. Seems to help targeting proteins to be folded toward HscA. This Pectobacterium carotovorum subsp. carotovorum (strain PC1) protein is Co-chaperone protein HscB.